The primary structure comprises 462 residues: MKFLSSLVVLGLSAQALASPYVDHQATKDQRDVNVFKQVLQDINLDVQKFDQDITQYQGGDPTVLLADSDAIIKTTEEGIQRIGPQPPLSVTEALALVGPVQGVNKLIMKAVDHLIEKKGPLVGGGYGPQVKDSLERQAHAASKLSELVSSKVPSPLAPISKQLSDQVAQALQKGIQAFSISARQATKVKREATKVQRDISAFKKVIQNISLAVNKFNVDIERYVGGDASHLLADGNVLIKATLDGVQSLQNEPPLSSMEALALVGPVQDLSNQILLAIQNLIDKKEPLVQAGFGGKVENNLRQQEEAAQKLSELVSTKVPHELADISRQLSDGIAAGIKKGIDAFAGTGPAPTTSSTPEASTAPAPSTPPQTPEDTLVPATSTPAPGPAPTAPDSSMVWPTSTTASPDVQPTITSSGTSVPAAPTGGNSSPAVPAFTGAASANQVSGAVGLAAGLLAVLAF.

A signal peptide spans 1 to 18; the sequence is MKFLSSLVVLGLSAQALA. Serine 313 is a binding site for hexadecanoate. Positions 346-429 are disordered; it reads FAGTGPAPTT…SVPAAPTGGN (84 aa). Positions 347–366 are enriched in low complexity; sequence AGTGPAPTTSSTPEASTAPA. Over residues 399–420 the composition is skewed to polar residues; sequence VWPTSTTASPDVQPTITSSGTS.

Belongs to the cell wall mannoprotein 1 family. In terms of assembly, monomer. Post-translationally, mannoprotein, glycosylated.

Its subcellular location is the secreted. The protein localises to the cell wall. Constitutive protein of the cell wall. Binds fatty acids and may thus serve as a fatty acid transporter between P.marneffei and host cells during infection. Abundant antigen target of host humoral immune response. This is Cell wall mannoprotein 1 from Talaromyces marneffei (Penicillium marneffei).